The primary structure comprises 132 residues: Small ribosomal subunit protein uS11 (132 aa).

The protein belongs to the universal ribosomal protein uS11 family. As to quaternary structure, part of the 30S ribosomal subunit. Interacts with proteins S7 and S18. Binds to IF-3.

In terms of biological role, located on the platform of the 30S subunit, it bridges several disparate RNA helices of the 16S rRNA. Forms part of the Shine-Dalgarno cleft in the 70S ribosome. The sequence is that of Small ribosomal subunit protein uS11 from Clostridium kluyveri (strain NBRC 12016).